A 180-amino-acid polypeptide reads, in one-letter code: Shikimate kinase (180 aa).

14-19 contacts ATP; it reads GAGKSS. Serine 18 contributes to the Mg(2+) binding site. Aspartate 36, arginine 60, and glycine 82 together coordinate substrate. Position 120 (arginine 120) interacts with ATP. Arginine 139 lines the substrate pocket.

The protein belongs to the shikimate kinase family. As to quaternary structure, monomer. Mg(2+) serves as cofactor.

It is found in the cytoplasm. It catalyses the reaction shikimate + ATP = 3-phosphoshikimate + ADP + H(+). Its pathway is metabolic intermediate biosynthesis; chorismate biosynthesis; chorismate from D-erythrose 4-phosphate and phosphoenolpyruvate: step 5/7. Its function is as follows. Catalyzes the specific phosphorylation of the 3-hydroxyl group of shikimic acid using ATP as a cosubstrate. This is Shikimate kinase from Xylella fastidiosa (strain M23).